The chain runs to 484 residues: Chromosomal replication initiator protein DnaA (484 aa).

The interval 1–73 is domain I, interacts with DnaA modulators; that stretch reads MQEGKNIWSL…EILIEKGHST (73 aa). Residues 73–140 form a domain II region; it reads TINVEFIHSQ…EEIHIKYRNP (68 aa). Positions 141–357 are domain III, AAA+ region; it reads FLKKKYTFEN…AAVTKLKAHI (217 aa). The ATP site is built by Gly-185, Gly-187, Lys-188, and Thr-189. The segment at 358–484 is domain IV, binds dsDNA; that stretch reads DLEDIEIDTN…IELMNKINKN (127 aa).

The protein belongs to the DnaA family. In terms of assembly, oligomerizes as a right-handed, spiral filament on DNA at oriC.

The protein resides in the cytoplasm. Functionally, plays an essential role in the initiation and regulation of chromosomal replication. ATP-DnaA binds to the origin of replication (oriC) to initiate formation of the DNA replication initiation complex once per cell cycle. Binds the DnaA box (a 9 base pair repeat at the origin) and separates the double-stranded (ds)DNA. Forms a right-handed helical filament on oriC DNA; dsDNA binds to the exterior of the filament while single-stranded (ss)DNA is stabiized in the filament's interior. The ATP-DnaA-oriC complex binds and stabilizes one strand of the AT-rich DNA unwinding element (DUE), permitting loading of DNA polymerase. After initiation quickly degrades to an ADP-DnaA complex that is not apt for DNA replication. Binds acidic phospholipids. This chain is Chromosomal replication initiator protein DnaA, found in Borrelia duttonii (strain Ly).